Consider the following 133-residue polypeptide: Large ribosomal subunit protein uL22 (133 aa).

It belongs to the universal ribosomal protein uL22 family. In terms of assembly, part of the 50S ribosomal subunit.

Its function is as follows. This protein binds specifically to 23S rRNA; its binding is stimulated by other ribosomal proteins, e.g. L4, L17, and L20. It is important during the early stages of 50S assembly. It makes multiple contacts with different domains of the 23S rRNA in the assembled 50S subunit and ribosome. Functionally, the globular domain of the protein is located near the polypeptide exit tunnel on the outside of the subunit, while an extended beta-hairpin is found that lines the wall of the exit tunnel in the center of the 70S ribosome. The protein is Large ribosomal subunit protein uL22 of Aquifex aeolicus (strain VF5).